We begin with the raw amino-acid sequence, 173 residues long: Enhancer of split mdelta protein (173 aa).

The bHLH domain occupies 15-72 (YRKVTKPLLERKRRARMNLYLDELKDLIVDTMDAQGEQVSKLEKADILELTVNYLKAQ). Residues 93 to 126 (FRAGYTQAAYEVSHIFSTVPGLDLKFGTHLMKQL) enclose the Orange domain. The disordered stretch occupies residues 147 to 173 (VNLADQKRSKSPREEDIHHGEEVWRPW). Basic and acidic residues predominate over residues 151–173 (DQKRSKSPREEDIHHGEEVWRPW). A WRPW motif motif is present at residues 170–173 (WRPW).

In terms of assembly, transcription repression requires formation of a complex with a corepressor protein (Groucho).

The protein localises to the nucleus. In terms of biological role, transcriptional repressor of genes that require a bHLH protein for their transcription. May serve as a transcriptional regulator of the Achaete-scute complex (AS-C) genes. Contributes to the neural-epidermal lineage decision during early neurogenesis. As part of the Notch signaling pathway, required to maintain the self-renewal and identity of type II neuroblasts by regulating the expression of the transcriptional repressor erm. This Drosophila melanogaster (Fruit fly) protein is Enhancer of split mdelta protein.